The sequence spans 193 residues: AP-3 complex subunit sigma-2 (193 aa).

This sequence belongs to the adaptor complexes small subunit family. As to quaternary structure, adaptor protein complex 3 (AP-3) is a heterotetramer composed of two large adaptins (delta-type subunit AP3D1 and beta-type subunit AP3B1 or AP3B2), a medium adaptin (mu-type subunit AP3M1 or AP3M2) and a small adaptin (sigma-type subunit APS1 or AP3S2). Interacts with AGAP1. AP-3 associates with the BLOC-1 complex. As to expression, present in all adult tissues examined.

The protein localises to the golgi apparatus. The protein resides in the cytoplasmic vesicle membrane. In terms of biological role, part of the AP-3 complex, an adaptor-related complex which is not clathrin-associated. The complex is associated with the Golgi region as well as more peripheral structures. It facilitates the budding of vesicles from the Golgi membrane and may be directly involved in trafficking to lysosomes. In concert with the BLOC-1 complex, AP-3 is required to target cargos into vesicles assembled at cell bodies for delivery into neurites and nerve terminals. This chain is AP-3 complex subunit sigma-2 (AP3S2), found in Homo sapiens (Human).